Reading from the N-terminus, the 904-residue chain is Protein argonaute 4A (904 aa).

Disordered stretches follow at residues 1-33 (MESNSGEIEELPPPPPLPPNAEPIKTDDTKKLS) and 143-166 (KSSANGGSPGNDSPGNDRKRVRRP). Pro residues predominate over residues 11 to 21 (LPPPPPLPPNA). Low complexity predominate over residues 144 to 156 (SSANGGSPGNDSP). Positions 274–388 (PVVDFLLANQ…FPIELCSLVP (115 aa)) constitute a PAZ domain. Positions 557 to 865 (FLLCVLAERK…AAAQVSQFIK (309 aa)) constitute a Piwi domain. Residues 871-890 (ETSSSHGGHTSAGSAPVPEL) form a disordered region. Low complexity predominate over residues 872 to 885 (TSSSHGGHTSAGSA).

This sequence belongs to the argonaute family. Ago subfamily.

Functionally, probably involved in the RNA silencing pathway. May bind to short RNAs such as microRNAs (miRNAs) or short interfering RNAs (siRNAs), and represses the translation of mRNAs which are complementary to them. The polypeptide is Protein argonaute 4A (AGO4A) (Oryza sativa subsp. japonica (Rice)).